The sequence spans 186 residues: Ribosome-recycling factor (186 aa).

Belongs to the RRF family.

The protein resides in the cytoplasm. In terms of biological role, responsible for the release of ribosomes from messenger RNA at the termination of protein biosynthesis. May increase the efficiency of translation by recycling ribosomes from one round of translation to another. In Chlorobium chlorochromatii (strain CaD3), this protein is Ribosome-recycling factor.